The primary structure comprises 42 residues: Putative protein RNF216-like (42 aa).

The chain is Putative protein RNF216-like (RNF216P1) from Homo sapiens (Human).